The chain runs to 495 residues: Glutamate--tRNA ligase (495 aa).

A 'HIGH' region motif is present at residues 12–22; it reads PSPTGHLHIGN. The 'KMSKS' region signature appears at 259 to 263; the sequence is KLSKR. Position 262 (lysine 262) interacts with ATP.

Belongs to the class-I aminoacyl-tRNA synthetase family. Glutamate--tRNA ligase type 1 subfamily. In terms of assembly, monomer.

Its subcellular location is the cytoplasm. It carries out the reaction tRNA(Glu) + L-glutamate + ATP = L-glutamyl-tRNA(Glu) + AMP + diphosphate. Functionally, catalyzes the attachment of glutamate to tRNA(Glu) in a two-step reaction: glutamate is first activated by ATP to form Glu-AMP and then transferred to the acceptor end of tRNA(Glu). This is Glutamate--tRNA ligase from Latilactobacillus sakei subsp. sakei (strain 23K) (Lactobacillus sakei subsp. sakei).